Here is a 4481-residue protein sequence, read N- to C-terminus: Dynein axonemal heavy chain 17 (4481 aa).

Positions 1–1792 are stem; that stretch reads MPDLRIDYLE…FANICDAQIK (1792 aa). A Kelch 1 repeat occupies 521 to 569; it reads LLYMCGGLLERPLILVEVVPRYSVMLEMFNTELDNAKLMYDAQMAASAD. Residues 759–826 adopt a coiled-coil conformation; the sequence is ENVMEYIQEM…GRVANLNKRY (68 aa). 2 TPR repeats span residues 1533–1566 and 1688–1722; these read VVEA…YLET and IWWT…QLNA. AAA stretches follow at residues 1793-2014, 2074-2295, 2401-2649, and 2747-2996; these read YSYE…VLVV, KIIK…IGFK, ELDP…IFQG, and SYNE…ERRY. ATP is bound by residues 1831–1838 and 2112–2119; these read GPAGTGKT and GNAGSGKS. One copy of the Kelch 2 repeat lies at 2229-2275; the sequence is ISHLRTATPATVSRAGILYINPADLGWNPVVSSWIERRKVQSEKANL. ATP-binding positions include 2439–2446 and 2785–2792; these read GNAGTGKS and GVGGSGKQ. The Kelch 3 repeat unit spans residues 2782 to 2834; the sequence is LLVGVGGSGKQSLSRLAAYISALDVFQITLKKGYAIPDLKMDLATQYIKSAVK. Coiled coils occupy residues 3011–3071 and 3241–3293; these read YQNL…IQVV and DVAP…EKIK. The tract at residues 3011-3297 is stalk; that stretch reads YQNLLAKKRM…TAEKIKCQQE (287 aa). 2 AAA regions span residues 3389–3616 and 3826–4059; these read LTDD…EIEE and VKNF…VLYN. The stretch at 4138-4173 is one TPR 3 repeat; it reads PESPYLYGLHPNAEIGFLTVTSEKLFRTVLEMQPKE. 2 Kelch repeats span residues 4272–4321 and 4339–4385; these read NLGL…DLLQ and VWLA…DMTA.

It belongs to the dynein heavy chain family. As to quaternary structure, consists of at least two heavy chains and a number of intermediate and light chains.

The protein localises to the cytoplasm. It is found in the cytoskeleton. The protein resides in the flagellum axoneme. Its function is as follows. Force generating protein component of the outer dynein arms (ODAs) in the sperm flagellum. Produces force towards the minus ends of microtubules. Dynein has ATPase activity; the force-producing power stroke is thought to occur on release of ADP. Plays a major role in sperm motility, implicated in sperm flagellar assembly and beating. This is Dynein axonemal heavy chain 17 from Mus musculus (Mouse).